A 233-amino-acid chain; its full sequence is MKRKQDSKGAGSRGQGAGEKKQGAGGRGQGEKKQKKSPVPSPQSPVPDPDEWLQIGKIVSAQGLSGEVRVYPDSDFPERFEVPGTRWLLRPGQTEPQPIELLHGRYLENKNLYVLQLAGVENRTQSEELRGCMLFVPASDRPELGEDEYHVVDLIGMEVFLQTSGDLVGTVVDVIPAGNDLLEVSLHEPVPSDKKPKTVLIPFVKAIAPVVDLETRRIEITPPPGLLELGSGV.

Positions 1-51 are disordered; the sequence is MKRKQDSKGAGSRGQGAGEKKQGAGGRGQGEKKQKKSPVPSPQSPVPDPDE. Residues 11–28 are compositionally biased toward gly residues; sequence GSRGQGAGEKKQGAGGRG. The 82-residue stretch at 145–226 folds into the PRC barrel domain; it reads GEDEYHVVDL…RIEITPPPGL (82 aa).

This sequence belongs to the RimM family. Binds ribosomal protein uS19.

It is found in the cytoplasm. An accessory protein needed during the final step in the assembly of 30S ribosomal subunit, possibly for assembly of the head region. Essential for efficient processing of 16S rRNA. May be needed both before and after RbfA during the maturation of 16S rRNA. It has affinity for free ribosomal 30S subunits but not for 70S ribosomes. This Trichormus variabilis (strain ATCC 29413 / PCC 7937) (Anabaena variabilis) protein is Ribosome maturation factor RimM.